Here is a 286-residue protein sequence, read N- to C-terminus: Pollen allergen Phl p 5a (286 aa).

Positions 1 to 34 are enriched in low complexity; sequence ADLGYGPATPAAPAAGYTPATPAAPAGADAAGKA. Positions 1–35 are disordered; the sequence is ADLGYGPATPAAPAAGYTPATPAAPAGADAAGKAT.

This sequence belongs to the Poa p IX/Phl p VI allergen family.

It localises to the secreted. This is Pollen allergen Phl p 5a from Phleum pratense (Common timothy).